The sequence spans 98 residues: NADH-ubiquinone oxidoreductase chain 4L (98 aa).

The next 3 helical transmembrane spans lie at 1–21 (MTTMFLNLLLAFTVALVGVFI), 29–49 (TLLCLEGMMLSIFIMVALILL), and 59–79 (LPLILLVFSACEAGVGLALLV).

This sequence belongs to the complex I subunit 4L family. As to quaternary structure, core subunit of respiratory chain NADH dehydrogenase (Complex I) which is composed of 45 different subunits.

The protein localises to the mitochondrion inner membrane. It carries out the reaction a ubiquinone + NADH + 5 H(+)(in) = a ubiquinol + NAD(+) + 4 H(+)(out). Its function is as follows. Core subunit of the mitochondrial membrane respiratory chain NADH dehydrogenase (Complex I) which catalyzes electron transfer from NADH through the respiratory chain, using ubiquinone as an electron acceptor. Part of the enzyme membrane arm which is embedded in the lipid bilayer and involved in proton translocation. The chain is NADH-ubiquinone oxidoreductase chain 4L (MT-ND4L) from Ornithorhynchus anatinus (Duckbill platypus).